The chain runs to 79 residues: MKCKKQLLVIFFAYFLVVNESEAIFGSLFSLGSKLLPSVFKLFSRKKQRALMKRDLEDIMDPYQKNLKLDRYLRRLAMD.

An N-terminal signal peptide occupies residues 1–23 (MKCKKQLLVIFFAYFLVVNESEA). The propeptide occupies 49–79 (RALMKRDLEDIMDPYQKNLKLDRYLRRLAMD).

The protein belongs to the non-disulfide-bridged peptide (NDBP) superfamily. Medium-length antimicrobial peptide (group 3) family. Ponericin-W subfamily. As to expression, expressed by the venom gland.

The protein localises to the secreted. The protein resides in the target cell membrane. Its function is as follows. Antimicrobial peptide with potent activity against a range of Gram-positive and Gram-negative bacteria. Has high hemolytic activity against erythrocytes. May act by disrupting the integrity of the bacterial cell membrane. The chain is Ponericin-W-like 32.1 from Lychas mucronatus (Chinese swimming scorpion).